Here is a 43-residue protein sequence, read N- to C-terminus: MEPAIVLSISMAAVVVAITGISIYTSFGPPSKELNDPFDDHED.

The helical transmembrane segment at 4-24 (AIVLSISMAAVVVAITGISIY) threads the bilayer.

Belongs to the PsbN family.

It is found in the cellular thylakoid membrane. Its function is as follows. May play a role in photosystem I and II biogenesis. In Nostoc punctiforme (strain ATCC 29133 / PCC 73102), this protein is Protein PsbN.